A 256-amino-acid chain; its full sequence is Cytochrome c-type biogenesis protein CcmE homolog, mitochondrial (256 aa).

The transit peptide at 1–57 (MAARLLFRRSSQILRSIQRNPQISSSFESPPCPIFHSLTTASPDPSRLSSLTFLRSL) directs the protein to the mitochondrion. A helical transmembrane segment spans residues 84-106 (LWTYALTFSCIAGFVVIVLNQFQ). The heme site is built by His222 and Tyr226.

This sequence belongs to the CcmE/CycJ family.

It is found in the mitochondrion inner membrane. It localises to the mitochondrion intermembrane space. Its function is as follows. Heme-binding chaperone that may be involved in cytochrome c maturation in mitochondria. This chain is Cytochrome c-type biogenesis protein CcmE homolog, mitochondrial, found in Arabidopsis thaliana (Mouse-ear cress).